The primary structure comprises 135 residues: Protein NrdI (135 aa).

This sequence belongs to the NrdI family.

Functionally, probably involved in ribonucleotide reductase function. The protein is Protein NrdI of Pectobacterium carotovorum subsp. carotovorum (strain PC1).